The primary structure comprises 87 residues: Large ribosomal subunit protein eL33 (87 aa).

Belongs to the eukaryotic ribosomal protein eL33 family.

This chain is Large ribosomal subunit protein eL33, found in Pyrococcus horikoshii (strain ATCC 700860 / DSM 12428 / JCM 9974 / NBRC 100139 / OT-3).